The chain runs to 166 residues: uncharacterized protein (166 aa).

This is an uncharacterized protein from Acidianus hospitalis (AFV-1).